Here is a 107-residue protein sequence, read N- to C-terminus: Toluene 1,2-dioxygenase system ferredoxin subunit (107 aa).

The Rieske domain maps to 4 to 99 (TYILRQGDLP…IKVEGDEVHV (96 aa)). Residues Cys43, His45, Cys62, and His65 each contribute to the [2Fe-2S] cluster site.

This sequence belongs to the bacterial ring-hydroxylating dioxygenase ferredoxin component family. This dioxygenase system consists of four proteins: the two subunits of the hydroxylase component (todC1 and todC2), a ferredoxin (TodB) and a ferredoxin reductase (TodA).

Its pathway is xenobiotic degradation; toluene degradation. In terms of biological role, this protein seems to be a 2Fe-2S ferredoxin. In Pseudomonas putida (strain ATCC 700007 / DSM 6899 / JCM 31910 / BCRC 17059 / LMG 24140 / F1), this protein is Toluene 1,2-dioxygenase system ferredoxin subunit (todB).